The sequence spans 489 residues: Glycogen synthase (489 aa).

Residue Lys18 participates in ADP-alpha-D-glucose binding.

The protein belongs to the glycosyltransferase 1 family. Bacterial/plant glycogen synthase subfamily.

It carries out the reaction [(1-&gt;4)-alpha-D-glucosyl](n) + ADP-alpha-D-glucose = [(1-&gt;4)-alpha-D-glucosyl](n+1) + ADP + H(+). The protein operates within glycan biosynthesis; glycogen biosynthesis. Its function is as follows. Synthesizes alpha-1,4-glucan chains using ADP-glucose. This chain is Glycogen synthase, found in Rhodopseudomonas palustris (strain BisB18).